A 136-amino-acid chain; its full sequence is Transcription antitermination protein NusB (136 aa).

Belongs to the NusB family.

Involved in transcription antitermination. Required for transcription of ribosomal RNA (rRNA) genes. Binds specifically to the boxA antiterminator sequence of the ribosomal RNA (rrn) operons. The chain is Transcription antitermination protein NusB from Salinispora arenicola (strain CNS-205).